The chain runs to 1713 residues: uncharacterized protein (1713 aa).

The segment covering 1–12 (MNENEFSTNSLI) has biased composition (polar residues). Disordered stretches follow at residues 1 to 35 (MNEN…INFG), 79 to 200 (QQLN…KLSN), 226 to 290 (GNNN…QPLS), 309 to 557 (QYLS…PMSH), 713 to 734 (SNDQ…KKDR), 808 to 952 (SPPM…SITT), and 1143 to 1190 (HHHH…SISR). 5 stretches are compositionally biased toward low complexity: residues 13–35 (NQQG…INFG), 79–109 (QQLN…NNNN), 126–170 (NNSG…NSGN), 177–200 (NMSD…KLSN), and 226–264 (GNNN…GGNN). Residues 265 to 276 (SHHHHNHSHHNS) are compositionally biased toward basic residues. Composition is skewed to low complexity over residues 317 to 470 (NNIN…SPAS) and 478 to 489 (SNNFGGNHNNYN). A compositionally biased stretch (basic residues) spans 490-504 (HAHHSHHNNHAHHNT). The segment covering 505–553 (HNYNNNNNNNNNNNNNNNNNNNNSNNSNNNSNTNNNGNNGNNSNNNNNH) has biased composition (low complexity). Positions 544–825 (GNNSNNNNNH…QNPGRFLNHD (282 aa)) form a DNA-binding region, NDT80. Over residues 822–832 (LNHDKSLKKDP) the composition is skewed to basic and acidic residues. A compositionally biased stretch (gly residues) spans 838-874 (GGKGGGGSGSGGMGGGMGGGMGNNGSSGSSSNGGYGN). 2 stretches are compositionally biased toward low complexity: residues 898 to 946 (SPTT…PTLT) and 1148 to 1189 (QQQQ…SSIS). A Peptidase S74 domain is found at 1240 to 1355 (SDQRIKSNIR…RSLKKEKDHI (116 aa)). A run of 3 helical transmembrane segments spans residues 1416–1436 (TMFV…FYLF), 1447–1467 (LMNF…TFYV), and 1473–1493 (LIIA…VGFF). The segment covering 1596 to 1605 (NSNNNINNNN) has biased composition (low complexity). Disordered stretches follow at residues 1596 to 1634 (NSNN…DFHE) and 1646 to 1665 (IKGK…SSSN). A compositionally biased stretch (basic and acidic residues) spans 1617 to 1634 (FIDDFKKSSSNNHKDFHE).

The protein localises to the membrane. This is an uncharacterized protein from Dictyostelium discoideum (Social amoeba).